We begin with the raw amino-acid sequence, 129 residues long: Small ribosomal subunit protein uS11 (129 aa).

This sequence belongs to the universal ribosomal protein uS11 family. In terms of assembly, part of the 30S ribosomal subunit. Interacts with proteins S7 and S18. Binds to IF-3.

In terms of biological role, located on the platform of the 30S subunit, it bridges several disparate RNA helices of the 16S rRNA. Forms part of the Shine-Dalgarno cleft in the 70S ribosome. In Xanthobacter autotrophicus (strain ATCC BAA-1158 / Py2), this protein is Small ribosomal subunit protein uS11.